The chain runs to 599 residues: Stromal 70 kDa heat shock-related protein, chloroplastic (599 aa).

The segment at 545 to 573 is disordered; it reads NQPGAGGEPGAAQAQHQEQSSARQIQRAK. Residues 554-568 are compositionally biased toward low complexity; it reads GAAQAQHQEQSSARQ.

It belongs to the heat shock protein 70 family.

It is found in the plastid. The protein resides in the chloroplast stroma. Its function is as follows. Interacts with newly imported chloroplast proteins to assist in their maturation. This chain is Stromal 70 kDa heat shock-related protein, chloroplastic (CHSP70), found in Spinacia oleracea (Spinach).